Consider the following 747-residue polypeptide: Eukaryotic translation initiation factor 3 subunit B (747 aa).

The 87-residue stretch at 42–128 (AFVVVDGLPE…HTLRVNKLTD (87 aa)) folds into the RRM domain. 5 WD repeats span residues 195–234 (DRQH…RQRR), 236–292 (AHPF…PLRS), 310–349 (APKF…LLDK), 520–563 (LEKK…EKPE), and 578–623 (ADHY…LREE).

This sequence belongs to the eIF-3 subunit B family. In terms of assembly, component of the eukaryotic translation initiation factor 3 (eIF-3) complex.

The protein resides in the cytoplasm. In terms of biological role, RNA-binding component of the eukaryotic translation initiation factor 3 (eIF-3) complex, which is involved in protein synthesis of a specialized repertoire of mRNAs and, together with other initiation factors, stimulates binding of mRNA and methionyl-tRNAi to the 40S ribosome. The eIF-3 complex specifically targets and initiates translation of a subset of mRNAs involved in cell proliferation. This chain is Eukaryotic translation initiation factor 3 subunit B (prt-1), found in Neurospora crassa (strain ATCC 24698 / 74-OR23-1A / CBS 708.71 / DSM 1257 / FGSC 987).